Here is a 1382-residue protein sequence, read N- to C-terminus: DNA-directed RNA polymerase subunit beta (1382 aa).

Belongs to the RNA polymerase beta chain family. The RNAP catalytic core consists of 2 alpha, 1 beta, 1 beta' and 1 omega subunit. When a sigma factor is associated with the core the holoenzyme is formed, which can initiate transcription.

It catalyses the reaction RNA(n) + a ribonucleoside 5'-triphosphate = RNA(n+1) + diphosphate. In terms of biological role, DNA-dependent RNA polymerase catalyzes the transcription of DNA into RNA using the four ribonucleoside triphosphates as substrates. In Aliarcobacter butzleri (strain RM4018) (Arcobacter butzleri), this protein is DNA-directed RNA polymerase subunit beta.